A 404-amino-acid polypeptide reads, in one-letter code: Phosphopentomutase (404 aa).

D10, D303, H308, D344, H345, and H356 together coordinate Mn(2+).

Belongs to the phosphopentomutase family. Mn(2+) serves as cofactor.

The protein resides in the cytoplasm. It catalyses the reaction 2-deoxy-alpha-D-ribose 1-phosphate = 2-deoxy-D-ribose 5-phosphate. The catalysed reaction is alpha-D-ribose 1-phosphate = D-ribose 5-phosphate. It participates in carbohydrate degradation; 2-deoxy-D-ribose 1-phosphate degradation; D-glyceraldehyde 3-phosphate and acetaldehyde from 2-deoxy-alpha-D-ribose 1-phosphate: step 1/2. Isomerase that catalyzes the conversion of deoxy-ribose 1-phosphate (dRib-1-P) and ribose 1-phosphate (Rib-1-P) to deoxy-ribose 5-phosphate (dRib-5-P) and ribose 5-phosphate (Rib-5-P), respectively. In Shewanella sp. (strain MR-7), this protein is Phosphopentomutase.